We begin with the raw amino-acid sequence, 557 residues long: MPERDSEPFSNPLAPDGHDVDDPHSFHQSKLTNEDFRKLLMTPRAAPTSAPPSKSRHHEMPREYNEDEDPAARRRKKKSYYAKLRQQEIERERELAEKYRDRAKERRDGVNKDYEETELISTTANYRAVGPTAEADKSAAEKRRQLIQESKFLGGDMEHTHLVKGLDFALLQKVRAEIASKEKEEEELMEKPQKETKKDEDPENKIEFKTRLGRNVYRMLFKSKSYERNELFLPGRMAYVVDLDDEYADTDIPTTLIRSKADCPTMEAQTTLTTNDIVISKLTQILSYLRQGTRNKKLKKKDKGKLEEKKPPEADMNIFEDIGDYVPSTTKTPRDKERERYRERERDRERDRDRERDRERDRERERERDREREREEEKKRHSYFEKPKVDDEPMDVDKGPGSAKELIKSINEKFAGSAGWEGTESLKKPEDKKQLGDFFGMSNSYAECYPATMDDMAVDSDEEVDYSKMDQGNKKGPLGRWDFDTQEEYSEYMNNKEALPKAAFQYGIKMSEGRKTRRFKETNDKAELDRQWKKISAIIEKRKKMEADGVEVKRPKY.

The segment at 1-90 (MPERDSEPFS…YAKLRQQEIE (90 aa)) is disordered. Residues 16-25 (DGHDVDDPHS) show a composition bias toward basic and acidic residues. The span at 42–53 (TPRAAPTSAPPS) shows a compositional bias: low complexity. N6-acetyllysine occurs at positions 98 and 137. Lysine 151 is covalently cross-linked (Glycyl lysine isopeptide (Lys-Gly) (interchain with G-Cter in SUMO2)). The disordered stretch occupies residues 181 to 205 (KEKEEEELMEKPQKETKKDEDPENK). The residue at position 287 (serine 287) is a Phosphoserine. The span at 294–303 (RNKKLKKKDK) shows a compositional bias: basic residues. A disordered region spans residues 294–402 (RNKKLKKKDK…PMDVDKGPGS (109 aa)). Residues 304–313 (GKLEEKKPPE) show a composition bias toward basic and acidic residues. Glycyl lysine isopeptide (Lys-Gly) (interchain with G-Cter in SUMO2) cross-links involve residues lysine 310 and lysine 331. Over residues 332–398 (TPRDKERERY…VDDEPMDVDK (67 aa)) the composition is skewed to basic and acidic residues. 17 repeat units span residues 342-343 (RE), 344-345 (RE), 346-347 (RD), 348-349 (RE), 350-351 (RD), 352-353 (RD), 354-355 (RE), 356-357 (RD), 358-359 (RE), 360-361 (RD), 362-363 (RE), 364-365 (RE), 366-367 (RE), 368-369 (RD), 370-371 (RE), 372-373 (RE), and 374-375 (RE). The 17 X 2 AA tandem repeats of R-[ED] stretch occupies residues 342–375 (RERERDRERDRDRERDRERDRERERERDRERERE). Residues lysine 386, lysine 388, lysine 404, and lysine 408 each participate in a glycyl lysine isopeptide (Lys-Gly) (interchain with G-Cter in SUMO2) cross-link. Serine 417 and serine 460 each carry phosphoserine. Residue threonine 485 is modified to Phosphothreonine. Glycyl lysine isopeptide (Lys-Gly) (interchain with G-Cter in SUMO2) cross-links involve residues lysine 496, lysine 501, and lysine 509. Serine 536 bears the Phosphoserine mark. Glycyl lysine isopeptide (Lys-Gly) (interchain with G-Cter in SUMO2) cross-links involve residues lysine 541, lysine 543, lysine 544, and lysine 553.

The protein belongs to the RED family. As to quaternary structure, component of the spliceosome B complex. Interacts with SMU1. Interacts with MAD1L1. May interact with DHX15.

The protein resides in the nucleus. Its subcellular location is the nucleoplasm. It localises to the chromosome. The protein localises to the cytoplasm. It is found in the cytoskeleton. The protein resides in the spindle pole. Its function is as follows. Involved in pre-mRNA splicing as a component of the spliceosome. Auxiliary spliceosomal protein that regulates selection of alternative splice sites in a small set of target pre-mRNA species. Required for normal mitotic cell cycle progression. Recruits MAD1L1 and MAD2L1 to kinetochores, and is required to trigger the spindle assembly checkpoint. Required for normal accumulation of SMU1. The chain is Protein Red (Ik) from Rattus norvegicus (Rat).